Reading from the N-terminus, the 101-residue chain is Integration host factor subunit beta (101 aa).

The protein belongs to the bacterial histone-like protein family. In terms of assembly, heterodimer of an alpha and a beta chain.

This protein is one of the two subunits of integration host factor, a specific DNA-binding protein that functions in genetic recombination as well as in transcriptional and translational control. The polypeptide is Integration host factor subunit beta (Rhodopseudomonas palustris (strain BisB5)).